A 707-amino-acid polypeptide reads, in one-letter code: MEERTFEMELAGRKLVVQTGKVAQQANGAAWVKYGDTVVLVTACASKEPREGIDFFPLTVEYEERLYSIGKIPGGFIKREGKPSEKAILSARLIDRPIRPLFPEGYRNDVQVIATVLSVDPDAQPEIVAMIGSSVALSISDIPFNGPTGSVAVGLVDGKFVINPTYEQREKSLMHLVVSGTKDAIVMVEAGAKEVPEETILDAIVYAHQYIKQIVEFIEGIVKEVGVPKAEVVLHEIDKELEEKVRAYATEKIYNALRTPEKKERNDNLDKVEQEVLEHFKDEYPDNLADIDEVLYKIMKEQMRKMIKEEKIRVDGRGLDDIRPIWCEVGVLPRTHGSAIFTRGQTQVLTVATLGAIGDIQILEGIGDEEFKRYMHHYNFPPYSVGEVRPLRGPGRREIGHGALAERALEPVIPSEEEFPYTIRLVSEVLSSNGSTSQASVCGSTLALMDAGVPIKAPVAGIAMGLIKEEDEVLILTDIQGIEDFLGDMDFKVAGTEKGVTAIQMDIKIPGIDRDILQMALEKARKARLYVLQKMLEVIKEPRKELSKYAPRVVRMVVNPEKIRDIIGPAGKTITKIISETGVKIDIEEDGRLYITAPNLEAGERAKQMIEAITKDIEVGGIYLGKVLRIAPFGAFVEIAPGKEGLVHISNLSKKRVRRVEDVVKVGDNILVKVTEIDKLGRIVLSRKDAMPDEEESDNRKSDNRKK.

The Mg(2+) site is built by Asp484 and Asp490. In terms of domain architecture, KH spans 551–610; it reads PRVVRMVVNPEKIRDIIGPAGKTITKIISETGVKIDIEEDGRLYITAPNLEAGERAKQMI. The S1 motif domain maps to 620-688; that stretch reads GGIYLGKVLR…KLGRIVLSRK (69 aa). A disordered region spans residues 688–707; that stretch reads KDAMPDEEESDNRKSDNRKK. Residues 698-707 are compositionally biased toward basic and acidic residues; sequence DNRKSDNRKK.

The protein belongs to the polyribonucleotide nucleotidyltransferase family. Mg(2+) serves as cofactor.

Its subcellular location is the cytoplasm. It catalyses the reaction RNA(n+1) + phosphate = RNA(n) + a ribonucleoside 5'-diphosphate. Its function is as follows. Involved in mRNA degradation. Catalyzes the phosphorolysis of single-stranded polyribonucleotides processively in the 3'- to 5'-direction. The chain is Polyribonucleotide nucleotidyltransferase from Caldanaerobacter subterraneus subsp. tengcongensis (strain DSM 15242 / JCM 11007 / NBRC 100824 / MB4) (Thermoanaerobacter tengcongensis).